We begin with the raw amino-acid sequence, 202 residues long: Tumor necrosis factor alpha-induced protein 8-like protein 3 (202 aa).

Positions 1-10 are enriched in acidic residues; sequence MDTDSGDLSE. A disordered region spans residues 1–24; it reads MDTDSGDLSEGELSPGPEQFSSKS.

It belongs to the TNFAIP8 family.

It localises to the cytoplasm. The protein resides in the cell membrane. Functionally, may act as a lipid transfer protein. The protein is Tumor necrosis factor alpha-induced protein 8-like protein 3 (tnfaip8l3) of Xenopus laevis (African clawed frog).